A 159-amino-acid chain; its full sequence is Urease subunit beta 2 (159 aa).

The interval 1–24 is disordered; it reads MAKEPTKAAHPQPEQTKTNHKAHR.

Belongs to the urease beta subunit family. In terms of assembly, heterotrimer of UreA (gamma), UreB (beta) and UreC (alpha) subunits. Three heterotrimers associate to form the active enzyme.

The protein resides in the cytoplasm. The enzyme catalyses urea + 2 H2O + H(+) = hydrogencarbonate + 2 NH4(+). It participates in nitrogen metabolism; urea degradation; CO(2) and NH(3) from urea (urease route): step 1/1. Disrupting the ure2 operon has no effect on urease activity, or pathogen survival in BALB/c mice when inoculated by gavage, but confers slightly enhanced resistance to low pH killing in vitro. The chain is Urease subunit beta 2 from Brucella suis biovar 1 (strain 1330).